Consider the following 936-residue polypeptide: General transcription factor II-I repeat domain-containing protein 2 (936 aa).

The GTF2I-like 1 repeat unit spans residues 95–189 (EACPGEAQLL…FLGAESQLGG (95 aa)). The segment at 199–222 (PTVPPNDSYGPVSVKTEPMEDSGT) is disordered. One copy of the GTF2I-like 2 repeat lies at 319-413 (LSGLEKIKQL…LPGLELSNVG (95 aa)).

It belongs to the TFII-I family. As to expression, ubiquitous.

It is found in the nucleus. The protein is General transcription factor II-I repeat domain-containing protein 2 (Gtf2ird2) of Mus musculus (Mouse).